A 503-amino-acid chain; its full sequence is Aspartyl/glutamyl-tRNA(Asn/Gln) amidotransferase subunit B (503 aa).

This sequence belongs to the GatB/GatE family. GatB subfamily. As to quaternary structure, heterotrimer of A, B and C subunits.

The catalysed reaction is L-glutamyl-tRNA(Gln) + L-glutamine + ATP + H2O = L-glutaminyl-tRNA(Gln) + L-glutamate + ADP + phosphate + H(+). It carries out the reaction L-aspartyl-tRNA(Asn) + L-glutamine + ATP + H2O = L-asparaginyl-tRNA(Asn) + L-glutamate + ADP + phosphate + 2 H(+). Functionally, allows the formation of correctly charged Asn-tRNA(Asn) or Gln-tRNA(Gln) through the transamidation of misacylated Asp-tRNA(Asn) or Glu-tRNA(Gln) in organisms which lack either or both of asparaginyl-tRNA or glutaminyl-tRNA synthetases. The reaction takes place in the presence of glutamine and ATP through an activated phospho-Asp-tRNA(Asn) or phospho-Glu-tRNA(Gln). This is Aspartyl/glutamyl-tRNA(Asn/Gln) amidotransferase subunit B from Mycolicibacterium smegmatis (strain ATCC 700084 / mc(2)155) (Mycobacterium smegmatis).